The primary structure comprises 126 residues: Ribosome-binding factor A (126 aa).

Belongs to the RbfA family. In terms of assembly, monomer. Binds 30S ribosomal subunits, but not 50S ribosomal subunits or 70S ribosomes.

The protein resides in the cytoplasm. One of several proteins that assist in the late maturation steps of the functional core of the 30S ribosomal subunit. Associates with free 30S ribosomal subunits (but not with 30S subunits that are part of 70S ribosomes or polysomes). Required for efficient processing of 16S rRNA. May interact with the 5'-terminal helix region of 16S rRNA. The protein is Ribosome-binding factor A of Halorhodospira halophila (strain DSM 244 / SL1) (Ectothiorhodospira halophila (strain DSM 244 / SL1)).